Here is a 100-residue protein sequence, read N- to C-terminus: U12-ctenitoxin-Pn1a (100 aa).

Residues 1-28 (MKYRIFKMKYTLLFLSVIALVHIFAVEA) form the signal peptide. A propeptide spanning residues 29-41 (KDEPESDALVPQE) is cleaved from the precursor. 5 disulfide bridges follow: Cys-44/Cys-58, Cys-51/Cys-64, Cys-57/Cys-82, Cys-66/Cys-80, and Cys-90/Cys-97.

The protein belongs to the neurotoxin 09 (Tx3-6) family. Expressed by the venom gland.

The protein resides in the secreted. Functionally, probable neurotoxin. The sequence is that of U12-ctenitoxin-Pn1a from Phoneutria nigriventer (Brazilian armed spider).